Here is a 101-residue protein sequence, read N- to C-terminus: Rho GTPase-activating protein 39 (101 aa).

The 96-residue stretch at 1-96 (YEQCIAHYES…VLIQHLDTSF (96 aa)) folds into the Rho-GAP domain.

In terms of tissue distribution, preoptic area and testis.

This Rattus norvegicus (Rat) protein is Rho GTPase-activating protein 39 (Arhgap39).